The following is a 338-amino-acid chain: tRNA-specific 2-thiouridylase MnmA (338 aa).

Residues 6–13 and methionine 32 contribute to the ATP site; that span reads AMSGGVDS. The Nucleophile role is filled by cysteine 92. A disulfide bridge connects residues cysteine 92 and cysteine 186. Glycine 116 is a binding site for ATP. Residues 134–136 form an interaction with tRNA region; sequence KDQ. Cysteine 186 functions as the Cysteine persulfide intermediate in the catalytic mechanism. The tract at residues 288–289 is interaction with tRNA; it reads RY.

The protein belongs to the MnmA/TRMU family.

It is found in the cytoplasm. The enzyme catalyses S-sulfanyl-L-cysteinyl-[protein] + uridine(34) in tRNA + AH2 + ATP = 2-thiouridine(34) in tRNA + L-cysteinyl-[protein] + A + AMP + diphosphate + H(+). In terms of biological role, catalyzes the 2-thiolation of uridine at the wobble position (U34) of tRNA, leading to the formation of s(2)U34. This chain is tRNA-specific 2-thiouridylase MnmA, found in Campylobacter lari (strain RM2100 / D67 / ATCC BAA-1060).